The following is a 63-amino-acid chain: Large ribosomal subunit protein uL29 (63 aa).

It belongs to the universal ribosomal protein uL29 family.

In Erwinia tasmaniensis (strain DSM 17950 / CFBP 7177 / CIP 109463 / NCPPB 4357 / Et1/99), this protein is Large ribosomal subunit protein uL29.